The following is a 313-amino-acid chain: 18S rRNA aminocarboxypropyltransferase (313 aa).

Residues 1–30 are disordered; the sequence is MGKGKNKMHEPKNGRPQRGANGHSSRQNHR. The S-adenosyl-L-methionine site is built by serine 62, valine 110, leucine 133, and tryptophan 148. A compositionally biased stretch (basic and acidic residues) spans 215–228; it reads KETQERKSRAKEED. The interval 215-313 is disordered; that stretch reads KETQERKSRA…SYDPLGNLIR (99 aa). Polar residues predominate over residues 237–246; that stretch reads RRGNGSQSDT. Positions 247 to 257 are enriched in acidic residues; the sequence is SESEENSEQSD. A phosphoserine mark is found at serine 286 and serine 289.

The protein belongs to the TDD superfamily. TSR3 family.

It is found in the cytoplasm. Its subcellular location is the nucleus. The enzyme catalyses an N(1)-methylpseudouridine in rRNA + S-adenosyl-L-methionine = N(1)-methyl-N(3)-[(3S)-3-amino-3-carboxypropyl]pseudouridine in rRNA + S-methyl-5'-thioadenosine + H(+). It carries out the reaction N(1)-methylpseudouridine(1191) in yeast 18S rRNA + S-adenosyl-L-methionine = N(1)-methyl-N(3)-[(3S)-3-amino-3-carboxypropyl]pseudouridine(1191) in yeast 18S rRNA + S-methyl-5'-thioadenosine + H(+). Aminocarboxypropyltransferase that catalyzes the aminocarboxypropyl transfer on pseudouridine at position 1191 (Psi1191) in 18S rRNA. It constitutes the last step in biosynthesis of the hypermodified N1-methyl-N3-(3-amino-3-carboxypropyl) pseudouridine (m1acp3-Psi) conserved in eukaryotic 18S rRNA. Required for processing 35S pre-rRNA at site D. This chain is 18S rRNA aminocarboxypropyltransferase, found in Saccharomyces cerevisiae (strain ATCC 204508 / S288c) (Baker's yeast).